A 164-amino-acid chain; its full sequence is Large ribosomal subunit protein uL10 (164 aa).

The protein belongs to the universal ribosomal protein uL10 family. In terms of assembly, part of the ribosomal stalk of the 50S ribosomal subunit. The N-terminus interacts with L11 and the large rRNA to form the base of the stalk. The C-terminus forms an elongated spine to which L12 dimers bind in a sequential fashion forming a multimeric L10(L12)X complex.

Forms part of the ribosomal stalk, playing a central role in the interaction of the ribosome with GTP-bound translation factors. The polypeptide is Large ribosomal subunit protein uL10 (rplJ) (Helicobacter pylori (strain J99 / ATCC 700824) (Campylobacter pylori J99)).